A 469-amino-acid polypeptide reads, in one-letter code: MVAHLQPPKIIETCHISPPKGTVPSTTLPLTFFDAPWLSLPLADSLFFFSYQNSTESFLQDFVPNLKHSLSITLQHFFPYAGKLIIPPRPDPPYLHYNDGQDSLVFTVAESTETDFDQLKSDSPKDISVLHGVLPKLPPPHVSPEGIQMRPIMAMQVTIFPGAGICIGNSATHVVADGVTFSHFMKYWMSLTKSSGKDPATVLLPSLPIHSCRNMIKDPGEVGAGHLERFWSQNSAKHSSHVTPENMVRATFTLSRKQIDNLKSWVTEQSENQSPVSTFVVTLAFIWVSLIKTLVQDSETKANEEDKDEVFHLMINVDCRNRLKYTQPIPQTYFGNCMAPGIVSVKKHDLLGEKCVLAASDAITARIKDMLSSDLLKTAPRWGQGVRKWVMSHYPTSIAGAPKLGLYDMDFGLGKPCKMEIVHIETGGSIAFSESRDGSNGVEIGIALEKKKMDVFDSILQQGIKKFAT.

N-acetylmethionine is present on Met-1. Active-site proton acceptor residues include His-173 and Asp-410.

The protein belongs to the plant acyltransferase family. As to expression, highly expressed in flowers, leaves and roots. Lower levels of expression in stems and siliques.

Its function is as follows. Involved in the acylation of the 6'' position of the 3-O-glucose residue of anthocyanin. Also able to use flavonol 3-glucosides as the acyl acceptor. The chain is Coumaroyl-CoA:anthocyanidin 3-O-glucoside-6''-O-coumaroyltransferase 1 (3AT1) from Arabidopsis thaliana (Mouse-ear cress).